The chain runs to 77 residues: Omega-conotoxin-like 6 (77 aa).

A signal peptide spans 1 to 22 (MKLTCVVIIAVLLLTACQLITA). Residues 23-50 (DDSRGVQKHRSLRSTTKVSKSTSCMEAG) constitute a propeptide that is removed on maturation. 3 cysteine pairs are disulfide-bonded: Cys-46/Cys-61, Cys-53/Cys-64, and Cys-60/Cys-71.

The protein belongs to the conotoxin O1 superfamily. In terms of tissue distribution, expressed by the venom duct.

The protein resides in the secreted. Omega-conotoxins act at presynaptic membranes, they bind and block voltage-gated calcium channels (Cav). This is Omega-conotoxin-like 6 from Conus striatus (Striated cone).